The following is a 202-amino-acid chain: Nigerythrin (202 aa).

One can recognise a Ferritin-like diiron domain in the interval 23-168 (KTAVGSTLEN…AYNDIDAPDD (146 aa)). Positions 40, 73, 115, 118, 149, 152, 174, 177, 189, and 192 each coordinate Fe cation. Positions 169–202 (DKFHLCPICGYIHKGEDFEKCPICFRPKDTFTAY) constitute a Rubredoxin-like domain.

Homodimer. May possess two rubredoxin-like centers and two hemerythrin-like binuclear-iron centers per dimer.

The protein resides in the cytoplasm. Exhibits NADH peroxidase activity (in vitro). The polypeptide is Nigerythrin (ngr) (Nitratidesulfovibrio vulgaris (strain ATCC 29579 / DSM 644 / CCUG 34227 / NCIMB 8303 / VKM B-1760 / Hildenborough) (Desulfovibrio vulgaris)).